A 187-amino-acid polypeptide reads, in one-letter code: Threonylcarbamoyl-AMP synthase (187 aa).

The YrdC-like domain occupies 3 to 187 (QVTPSQISGI…IQTGHIFRQG (185 aa)).

The protein belongs to the SUA5 family. TsaC subfamily.

The protein localises to the cytoplasm. It catalyses the reaction L-threonine + hydrogencarbonate + ATP = L-threonylcarbamoyladenylate + diphosphate + H2O. Required for the formation of a threonylcarbamoyl group on adenosine at position 37 (t(6)A37) in tRNAs that read codons beginning with adenine. Catalyzes the conversion of L-threonine, HCO(3)(-)/CO(2) and ATP to give threonylcarbamoyl-AMP (TC-AMP) as the acyladenylate intermediate, with the release of diphosphate. The protein is Threonylcarbamoyl-AMP synthase of Shewanella amazonensis (strain ATCC BAA-1098 / SB2B).